A 368-amino-acid polypeptide reads, in one-letter code: Agmatine deiminase (368 aa).

Cysteine 357 functions as the Amidino-cysteine intermediate in the catalytic mechanism.

The protein belongs to the agmatine deiminase family. Homodimer.

It catalyses the reaction agmatine + H2O = N-carbamoylputrescine + NH4(+). It participates in amine and polyamine biosynthesis; putrescine biosynthesis via agmatine pathway; N-carbamoylputrescine from agmatine: step 1/1. Its function is as follows. Mediates the hydrolysis of agmatine into N-carbamoylputrescine in the arginine decarboxylase (ADC) pathway of putrescine biosynthesis, a basic polyamine. The sequence is that of Agmatine deiminase from Pseudomonas fluorescens (strain ATCC BAA-477 / NRRL B-23932 / Pf-5).